The sequence spans 530 residues: UDP-glucuronosyltransferase 2B15 (530 aa).

The first 23 residues, 1–23, serve as a signal peptide directing secretion; the sequence is MSGKWISALLLLQISFCFKSGNC. Residue Asn-316 is glycosylated (N-linked (GlcNAc...) asparagine). A helical membrane pass occupies residues 494-510; that stretch reads VIGFLLSCVAVTVVLAL.

This sequence belongs to the UDP-glycosyltransferase family. N-glycosylated. Liver. Lower levels seen in the kidney and testis.

The protein resides in the endoplasmic reticulum membrane. It catalyses the reaction glucuronate acceptor + UDP-alpha-D-glucuronate = acceptor beta-D-glucuronoside + UDP + H(+). It carries out the reaction 17alpha-estradiol + UDP-alpha-D-glucuronate = 17alpha-estradiol 3-O-(beta-D-glucuronate) + UDP + H(+). The enzyme catalyses 16alpha,17alpha-estriol + UDP-alpha-D-glucuronate = 16alpha,17alpha-estriol 3-O-(beta-D-glucuronate) + UDP + H(+). The catalysed reaction is 17beta-hydroxy-5alpha-androstan-3-one + UDP-alpha-D-glucuronate = 5alpha-dihydrotestosterone 17-O-(beta-D-glucuronate) + UDP + H(+). Its function is as follows. UDP-glucuronosyltransferase (UGT) that catalyzes phase II biotransformation reactions in which lipophilic substrates are conjugated with glucuronic acid to increase the metabolite's water solubility, thereby facilitating excretion into either the urine or bile. Essential for the elimination and detoxification of drugs, xenobiotics and endogenous compounds. Catalyzes the glucuronidation of endogenous steroid hormones such as androgens (testosterone, androsterone) and estrogens (estradiol, epiestradiol, estriol, catechol estrogens). Displays glucuronidation activity toward several classes of xenoblotic substrates, including phenolic compounds (eugenol, 4-nitrophenol, 4-hydroxybiphenyl) and phenylpropanoids (naringenin, coumarins). Catalyzes the glucuronidation of monoterpenoid alcohols such as borneol, menthol and isomenthol, a class of natural compounds used in essential oils. This chain is UDP-glucuronosyltransferase 2B15, found in Rattus norvegicus (Rat).